Reading from the N-terminus, the 764-residue chain is Ribosomal protein S6 kinase alpha-6 (764 aa).

The segment at Met-1–Ser-24 is disordered. One can recognise a Protein kinase 1 domain in the interval Phe-93–Phe-350. Residues Leu-99–Val-107 and Lys-125 contribute to the ATP site. Asp-218 acts as the Proton acceptor in catalysis. A phosphoserine mark is found at Ser-252, Ser-392, and Ser-409. Residues Ala-351 to Lys-420 form the AGC-kinase C-terminal domain. Positions Tyr-446–Arg-706 constitute a Protein kinase 2 domain. Residues Ile-452–Cys-460 and Lys-475 each bind ATP. Catalysis depends on Asp-563, which acts as the Proton acceptor. The residue at position 601 (Thr-601) is a Phosphothreonine.

The protein belongs to the protein kinase superfamily. AGC Ser/Thr protein kinase family. S6 kinase subfamily. As to quaternary structure, forms a complex with MAPK3/ERK1 but not with MAPK9 or MAPK14 in serum-starved cells. Mg(2+) is required as a cofactor. Phosphorylated at Ser-252, Ser-392, and Ser-409 in serum-starved cells.

The protein resides in the cytoplasm. Its subcellular location is the cytosol. It localises to the nucleus. It carries out the reaction L-seryl-[protein] + ATP = O-phospho-L-seryl-[protein] + ADP + H(+). The enzyme catalyses L-threonyl-[protein] + ATP = O-phospho-L-threonyl-[protein] + ADP + H(+). With respect to regulation, constitutively activated by phosphorylation at Ser-252, Ser-392, and Ser-409 in serum-starved cells. Does not require growth factor stimulation for significant kinase activity. Constitutively active serine/threonine-protein kinase that exhibits growth-factor-independent kinase activity and that may participate in p53/TP53-dependent cell growth arrest signaling and play an inhibitory role during embryogenesis. The protein is Ribosomal protein S6 kinase alpha-6 (Rps6ka6) of Mus musculus (Mouse).